A 403-amino-acid chain; its full sequence is Phosphoglycerate kinase (403 aa).

Substrate contacts are provided by residues aspartate 22–asparagine 24, arginine 37, histidine 60–arginine 63, arginine 119, and arginine 156. Residues lysine 206, glycine 302, glutamate 333, and glycine 359–serine 362 each bind ATP.

It belongs to the phosphoglycerate kinase family. In terms of assembly, monomer.

The protein localises to the cytoplasm. It catalyses the reaction (2R)-3-phosphoglycerate + ATP = (2R)-3-phospho-glyceroyl phosphate + ADP. It functions in the pathway carbohydrate degradation; glycolysis; pyruvate from D-glyceraldehyde 3-phosphate: step 2/5. The protein is Phosphoglycerate kinase of Streptomyces avermitilis (strain ATCC 31267 / DSM 46492 / JCM 5070 / NBRC 14893 / NCIMB 12804 / NRRL 8165 / MA-4680).